The following is a 318-amino-acid chain: L-malyl-CoA/beta-methylmalyl-CoA lyase (318 aa).

Residues Phe-19, Arg-24, Lys-30, and Arg-76 each contribute to the substrate site. Positions 141 and 168 each coordinate Mg(2+). Residues 167–168 (AD) and 251–252 (IH) contribute to the substrate site.

This sequence belongs to the HpcH/HpaI aldolase family. Homohexamer. Dimer of trimers. The cofactor is Mg(2+). Requires Mn(2+) as cofactor.

It catalyses the reaction (S)-malyl-CoA = glyoxylate + acetyl-CoA. It carries out the reaction (2R,3S)-beta-methylmalyl-CoA = propanoyl-CoA + glyoxylate. Functionally, involved in the ethylmalonyl-CoA pathway for acetate assimilation. Catalyzes the reversible condensation of glyoxylate and acetyl-CoA to L-malyl-CoA and the reversible condensation of glyoxylate and propionyl-CoA to yield beta-methylmalyl-CoA. This chain is L-malyl-CoA/beta-methylmalyl-CoA lyase, found in Cereibacter sphaeroides (strain ATCC 17025 / ATH 2.4.3) (Rhodobacter sphaeroides).